The chain runs to 154 residues: MTEINGNLSAEGLNFCIVVGRFNDLITNKLLEGAIDCIVRHGGSEDNITVVRVPGSFEIPLIAKKVAKTGKYDAVICLGAVIRGSTPHFEYVAAEVTKGIALVSLETEIPVSYGILTTDTIEQAVERAGTKMGNKGFDAALSAIEMANLIKEIR.

5-amino-6-(D-ribitylamino)uracil contacts are provided by residues Phe-22, 56-58 (SFE), and 80-82 (AVI). 85 to 86 (ST) lines the (2S)-2-hydroxy-3-oxobutyl phosphate pocket. Residue His-88 is the Proton donor of the active site. Tyr-113 is a binding site for 5-amino-6-(D-ribitylamino)uracil. Arg-127 serves as a coordination point for (2S)-2-hydroxy-3-oxobutyl phosphate.

It belongs to the DMRL synthase family. Forms an icosahedral capsid composed of 60 subunits, arranged as a dodecamer of pentamers.

The enzyme catalyses (2S)-2-hydroxy-3-oxobutyl phosphate + 5-amino-6-(D-ribitylamino)uracil = 6,7-dimethyl-8-(1-D-ribityl)lumazine + phosphate + 2 H2O + H(+). The protein operates within cofactor biosynthesis; riboflavin biosynthesis; riboflavin from 2-hydroxy-3-oxobutyl phosphate and 5-amino-6-(D-ribitylamino)uracil: step 1/2. Catalyzes the formation of 6,7-dimethyl-8-ribityllumazine by condensation of 5-amino-6-(D-ribitylamino)uracil with 3,4-dihydroxy-2-butanone 4-phosphate. This is the penultimate step in the biosynthesis of riboflavin. The polypeptide is 6,7-dimethyl-8-ribityllumazine synthase (Persephonella marina (strain DSM 14350 / EX-H1)).